Reading from the N-terminus, the 142-residue chain is Large ribosomal subunit protein uL11 (142 aa).

This sequence belongs to the universal ribosomal protein uL11 family. As to quaternary structure, part of the ribosomal stalk of the 50S ribosomal subunit. Interacts with L10 and the large rRNA to form the base of the stalk. L10 forms an elongated spine to which L12 dimers bind in a sequential fashion forming a multimeric L10(L12)X complex. Post-translationally, one or more lysine residues are methylated.

Functionally, forms part of the ribosomal stalk which helps the ribosome interact with GTP-bound translation factors. This chain is Large ribosomal subunit protein uL11, found in Photorhabdus laumondii subsp. laumondii (strain DSM 15139 / CIP 105565 / TT01) (Photorhabdus luminescens subsp. laumondii).